The primary structure comprises 410 residues: Peptidase T (410 aa).

His-79 lines the Zn(2+) pocket. Residue Asp-81 is part of the active site. Asp-142 contributes to the Zn(2+) binding site. Glu-176 serves as the catalytic Proton acceptor. 3 residues coordinate Zn(2+): Glu-177, Asp-199, and His-381.

The protein belongs to the peptidase M20B family. It depends on Zn(2+) as a cofactor.

The protein resides in the cytoplasm. The catalysed reaction is Release of the N-terminal residue from a tripeptide.. Its function is as follows. Cleaves the N-terminal amino acid of tripeptides. This is Peptidase T from Bacillus anthracis (strain A0248).